Reading from the N-terminus, the 473-residue chain is MPSSTPGGSLKHLSDLTPPSQDRTWLTSSHPRLPIAATCCADKSVRVYSLVNFTLLSTISGGHKRSVRSCAWKPHVKGESVLATASFDATVGVWRRWDGFGRAERDMLGLAGGLAEADRQEGDDTDGDEEDEDEEWGFAVLLDGHDSEVKSVSWSSGGSLLATCSRDKSIWIWEDLEDGDNNFETVAVLQEHSGDVKWVAWHPEEECLASGSYDDTIRLWREDVDDWGQVACLRGHEGTVWCVEWEAPTSIAGDNGDGAPTTMPIDPENGKLAPCERKKWIEERSMSGPRLVSCSDDKTIRIWRKQPQEKPPPVQYSSIPSTIRPATIDETWIEECQLPAMHDLSIYSVAWSKKTGLIASTGADGRIVIYQERFTSKPPVHTTSEQDKPDSARETQKANGERTAPSTAWEVVACVDAAHEIYEVNHVCWAKRADQRKSQQQNFDNSEMDHANEEEVLLSTGDDGVVRVWTLER.

Residues 1–25 (MPSSTPGGSLKHLSDLTPPSQDRTW) form a disordered region. 2 WD repeats span residues 11–58 (KHLS…LLST) and 62–104 (GHKR…GRAE). The disordered stretch occupies residues 112–133 (GGLAEADRQEGDDTDGDEEDED). Residues 123 to 133 (DDTDGDEEDED) show a composition bias toward acidic residues. WD repeat units follow at residues 144–183 (GHDS…DNNF), 191–230 (EHSG…WGQV), 235–313 (GHEG…KPPP), and 341–380 (MHDL…KPPV). The segment at 377 to 405 (KPPVHTTSEQDKPDSARETQKANGERTAP) is disordered. Positions 384–400 (SEQDKPDSARETQKANG) are enriched in basic and acidic residues. The stretch at 438–473 (SQQQNFDNSEMDHANEEEVLLSTGDDGVVRVWTLER) is one WD 7 repeat.

Belongs to the WD repeat CIA1 family.

In terms of biological role, essential component of the cytosolic iron-sulfur (Fe/S) protein assembly machinery. Required for the maturation of extramitochondrial Fe/S proteins. In Coccidioides immitis (strain RS) (Valley fever fungus), this protein is Probable cytosolic iron-sulfur protein assembly protein 1.